The sequence spans 147 residues: Cyanate hydratase (147 aa).

Catalysis depends on residues R88, E91, and S114.

It belongs to the cyanase family.

The catalysed reaction is cyanate + hydrogencarbonate + 3 H(+) = NH4(+) + 2 CO2. In terms of biological role, catalyzes the reaction of cyanate with bicarbonate to produce ammonia and carbon dioxide. The protein is Cyanate hydratase of Methylobacillus flagellatus (strain ATCC 51484 / DSM 6875 / VKM B-1610 / KT).